We begin with the raw amino-acid sequence, 165 residues long: NAD(P)H-quinone oxidoreductase subunit J, chloroplastic (165 aa).

This sequence belongs to the complex I 30 kDa subunit family. In terms of assembly, NDH is composed of at least 16 different subunits, 5 of which are encoded in the nucleus.

Its subcellular location is the plastid. The protein localises to the chloroplast thylakoid membrane. The catalysed reaction is a plastoquinone + NADH + (n+1) H(+)(in) = a plastoquinol + NAD(+) + n H(+)(out). It catalyses the reaction a plastoquinone + NADPH + (n+1) H(+)(in) = a plastoquinol + NADP(+) + n H(+)(out). NDH shuttles electrons from NAD(P)H:plastoquinone, via FMN and iron-sulfur (Fe-S) centers, to quinones in the photosynthetic chain and possibly in a chloroplast respiratory chain. The immediate electron acceptor for the enzyme in this species is believed to be plastoquinone. Couples the redox reaction to proton translocation, and thus conserves the redox energy in a proton gradient. The chain is NAD(P)H-quinone oxidoreductase subunit J, chloroplastic from Ipomoea purpurea (Common morning glory).